We begin with the raw amino-acid sequence, 312 residues long: tRNA U34 carboxymethyltransferase (312 aa).

Residues Lys-88, Trp-102, Lys-107, Gly-127, 149–151 (DPS), 177–178 (LD), Met-191, Tyr-195, and Arg-304 contribute to the carboxy-S-adenosyl-L-methionine site.

It belongs to the class I-like SAM-binding methyltransferase superfamily. CmoB family. In terms of assembly, homotetramer.

It carries out the reaction carboxy-S-adenosyl-L-methionine + 5-hydroxyuridine(34) in tRNA = 5-carboxymethoxyuridine(34) in tRNA + S-adenosyl-L-homocysteine + H(+). In terms of biological role, catalyzes carboxymethyl transfer from carboxy-S-adenosyl-L-methionine (Cx-SAM) to 5-hydroxyuridine (ho5U) to form 5-carboxymethoxyuridine (cmo5U) at position 34 in tRNAs. In Dichelobacter nodosus (strain VCS1703A), this protein is tRNA U34 carboxymethyltransferase.